A 233-amino-acid polypeptide reads, in one-letter code: Glycerol-3-phosphate acyltransferase (233 aa).

The next 5 helical transmembrane spans lie at 7-27 (WIII…GYII), 94-114 (ISIV…YIGF), 127-147 (VIAI…IVAF), 153-173 (SIGS…GVLI), and 185-205 (ISYE…LLII).

This sequence belongs to the PlsY family. Probably interacts with PlsX.

Its subcellular location is the cell membrane. The enzyme catalyses an acyl phosphate + sn-glycerol 3-phosphate = a 1-acyl-sn-glycero-3-phosphate + phosphate. The protein operates within lipid metabolism; phospholipid metabolism. Catalyzes the transfer of an acyl group from acyl-phosphate (acyl-PO(4)) to glycerol-3-phosphate (G3P) to form lysophosphatidic acid (LPA). This enzyme utilizes acyl-phosphate as fatty acyl donor, but not acyl-CoA or acyl-ACP. This chain is Glycerol-3-phosphate acyltransferase, found in Acholeplasma laidlawii.